The chain runs to 30 residues: Trypsin inhibitor 3 (30 aa).

Cystine bridges form between cysteine 4-cysteine 21, cysteine 11-cysteine 23, and cysteine 17-cysteine 29.

The protein belongs to the protease inhibitor I7 (squash-type serine protease inhibitor) family.

Its subcellular location is the secreted. Inhibits trypsin. The sequence is that of Trypsin inhibitor 3 from Momordica charantia (Bitter gourd).